A 358-amino-acid chain; its full sequence is HTH-type transcriptional regulator IpsA (358 aa).

An HTH lacI-type domain is found at 8–63 (GTLASIAAKLGISRTTVSNAYNRPEQLSAELRQRILDTAEDMGYLGPDPVARSLRT). Residues 10-29 (LASIAAKLGISRTTVSNAYN) constitute a DNA-binding region (H-T-H motif).

Homodimer.

Myo-inositol causes the dissociation of the IpsA-DNA complex in vitro. Its function is as follows. Plays a role in the regulation of cell wall biogenesis. Inositol-dependent transcriptional activator of ino1, which encodes inositol phosphate synthase. Also regulates other target genes, which are most likely involved in the synthesis of inositol-derived cell wall components and mycothiol. Acts by binding to a conserved palindromic motif within the promoter regions. The chain is HTH-type transcriptional regulator IpsA from Corynebacterium glutamicum (strain ATCC 13032 / DSM 20300 / JCM 1318 / BCRC 11384 / CCUG 27702 / LMG 3730 / NBRC 12168 / NCIMB 10025 / NRRL B-2784 / 534).